Reading from the N-terminus, the 336-residue chain is Putative ALA-interacting subunit 4 (336 aa).

A helical transmembrane segment spans residues 36-56 (VILTFLVSGVVFIPLGVICLF). Asn94 carries N-linked (GlcNAc...) asparagine glycosylation. Basic and acidic residues predominate over residues 127-142 (RQDGQLRSPKDEHETK). Residues 127-148 (RQDGQLRSPKDEHETKSCAPED) are disordered. Asn167 carries N-linked (GlcNAc...) asparagine glycosylation. The helical transmembrane segment at 290 to 310 (FLGIAYLTVGSICLFLAVSFS) threads the bilayer. An N-linked (GlcNAc...) asparagine glycan is attached at Asn329.

It belongs to the CDC50/LEM3 family. As to expression, expressed in flowers. May be restricted to pollen grains.

The protein resides in the membrane. This Arabidopsis thaliana (Mouse-ear cress) protein is Putative ALA-interacting subunit 4 (ALIS4).